A 647-amino-acid chain; its full sequence is DNA mismatch repair protein MutL (647 aa).

The protein belongs to the DNA mismatch repair MutL/HexB family.

This protein is involved in the repair of mismatches in DNA. It is required for dam-dependent methyl-directed DNA mismatch repair. May act as a 'molecular matchmaker', a protein that promotes the formation of a stable complex between two or more DNA-binding proteins in an ATP-dependent manner without itself being part of a final effector complex. In Bacillus thuringiensis (strain Al Hakam), this protein is DNA mismatch repair protein MutL.